The primary structure comprises 413 residues: RNA-binding protein 41 (413 aa).

Polar residues predominate over residues Ser223 to Leu235. Positions Ser223–Lys247 are disordered. Ser232 bears the Phosphoserine mark. The region spanning Lys309–Asn387 is the RRM domain.

In terms of biological role, may bind RNA. The sequence is that of RNA-binding protein 41 (RBM41) from Homo sapiens (Human).